A 625-amino-acid polypeptide reads, in one-letter code: Serine/threonine-protein kinase PknB (625 aa).

The Cytoplasmic segment spans residues 1–331 (MTTPQHLSDR…KQRSTSVARW (331 aa)). Residues 11-274 (YELGEILGFG…TAAEMRADLI (264 aa)) form the Protein kinase domain. ATP is bound by residues 17-25 (LGFGGMSEV), K40, and 93-95 (EYV). D138 functions as the Proton acceptor in the catalytic mechanism. Residues 140–143 (KPAN) and D156 contribute to the ATP site. Mg(2+) contacts are provided by N143 and D156. S169 carries the post-translational modification Phosphoserine; by autocatalysis. Phosphothreonine; by autocatalysis is present on residues T171, T173, and T294. At S295 the chain carries Phosphoserine; by autocatalysis. The disordered stretch occupies residues 302–321 (ADRAGAATQDMPVPRPAGYS). T309 carries the phosphothreonine; by autocatalysis modification. Residues 332–352 (LIAVAVLAVLTVVVTVAINMV) traverse the membrane as a helical segment. The Extracellular segment spans residues 353-625 (GGNPRNVQVP…DAKITLSFAA (273 aa)). 4 PASTA domains span residues 355 to 421 (NPRN…NVST), 422 to 489 (GPEQ…VVGA), 490 to 556 (GPED…RVSK), and 557 to 625 (GNQF…SFAA). The disordered stretch occupies residues 591-612 (DVRDSGQRTNAVVTQSPSAGTP). Positions 597-611 (QRTNAVVTQSPSAGT) are enriched in polar residues.

Belongs to the protein kinase superfamily. Ser/Thr protein kinase family. Homodimer. In terms of processing, autophosphorylated. Dephosphorylated by PstP.

Its subcellular location is the cell membrane. The enzyme catalyses L-seryl-[protein] + ATP = O-phospho-L-seryl-[protein] + ADP + H(+). It catalyses the reaction L-threonyl-[protein] + ATP = O-phospho-L-threonyl-[protein] + ADP + H(+). By K-252a. Protein kinase that regulates many aspects of mycobacterial physiology. Is a key component of a signal transduction pathway that regulates cell growth, cell shape and cell division via phosphorylation of target proteins. Probably phosphorylates RseA. The protein is Serine/threonine-protein kinase PknB (pknB) of Mycolicibacterium smegmatis (strain ATCC 700084 / mc(2)155) (Mycobacterium smegmatis).